The primary structure comprises 580 residues: uncharacterized protein (580 aa).

Residues 1–44 (MSESSVNADTPKNTNDVLNGAYQSATTEPEGQYRSATDNPSLYQ) are compositionally biased toward polar residues. Positions 1 to 45 (MSESSVNADTPKNTNDVLNGAYQSATTEPEGQYRSATDNPSLYQV) are disordered. Serine 99 carries the post-translational modification Phosphoserine. Transmembrane regions (helical) follow at residues 143–163 (IYAYASLTIAWGSSVLSPASA), 177–197 (LLNVSLFMLGYCLGPICWAPM), 207–227 (LYIGLFLFSVFQIAVATAQDI), 235–255 (FFGGYGACVPLCVVAAAFADM), 265–285 (ITIFAAVIFVGPLVAPIVGGF), 295–315 (WTEYITSFMGFLSIILIYLFC), 370–390 (PIVFLVSLYCSFVYAIIYLLL), 405–425 (LGVSALPYIGILVGVFIGCGI), 450–470 (LPPMMIGSFLFPAGIFWLAWS), 476–496 (VHWIVPTLSGLLTGAGILLIF), 511–533 (AASVFAANVIMRSAVAGGFPLFA), and 546–566 (GSLLGFIATALIPMPFAFFFF).

Belongs to the major facilitator superfamily. CAR1 family.

Its subcellular location is the membrane. This is an uncharacterized protein from Schizosaccharomyces pombe (strain 972 / ATCC 24843) (Fission yeast).